A 451-amino-acid chain; its full sequence is Probable metal transport system membrane protein CT_069 (451 aa).

The next 8 membrane-spanning stretches (helical) occupy residues 14–34, 38–58, 70–90, 100–120, 145–165, 192–212, 233–253, and 269–289; these read SFLA…ILLV, PLLS…GALL, WVII…ISFL, SALC…VSYV, TEAK…WWWY, VLVF…ILLI, ILIL…YFSV, and ILPT…LCLI. Residues 432–451 form a disordered region; the sequence is PDYDPHQREIPKRTRKSDGC. A compositionally biased stretch (basic and acidic residues) spans 434–451; sequence YDPHQREIPKRTRKSDGC.

This sequence belongs to the ABC-3 integral membrane protein family.

Its subcellular location is the cell inner membrane. Part of an ATP-driven transport system CT_067/CT_068/CT_069/CT_070 for a metal. The chain is Probable metal transport system membrane protein CT_069 from Chlamydia trachomatis serovar D (strain ATCC VR-885 / DSM 19411 / UW-3/Cx).